A 509-amino-acid polypeptide reads, in one-letter code: Maturase K (509 aa).

This sequence belongs to the intron maturase 2 family. MatK subfamily.

It is found in the plastid. Its subcellular location is the chloroplast. Usually encoded in the trnK tRNA gene intron. Probably assists in splicing its own and other chloroplast group II introns. The sequence is that of Maturase K from Anthocercis angustifolia (Narrow-leaf ray-flower).